The primary structure comprises 969 residues: Isoleucine--tRNA ligase (969 aa).

Positions 68–78 (PYANGNLHMGH) match the 'HIGH' region motif. Glutamate 584 lines the L-isoleucyl-5'-AMP pocket. The 'KMSKS' region motif lies at 625–629 (KMSKS). Lysine 628 contributes to the ATP binding site. Cysteine 938, cysteine 941, cysteine 958, and cysteine 961 together coordinate Zn(2+).

Belongs to the class-I aminoacyl-tRNA synthetase family. IleS type 1 subfamily. Monomer. Requires Zn(2+) as cofactor.

It localises to the cytoplasm. The enzyme catalyses tRNA(Ile) + L-isoleucine + ATP = L-isoleucyl-tRNA(Ile) + AMP + diphosphate. Catalyzes the attachment of isoleucine to tRNA(Ile). As IleRS can inadvertently accommodate and process structurally similar amino acids such as valine, to avoid such errors it has two additional distinct tRNA(Ile)-dependent editing activities. One activity is designated as 'pretransfer' editing and involves the hydrolysis of activated Val-AMP. The other activity is designated 'posttransfer' editing and involves deacylation of mischarged Val-tRNA(Ile). The sequence is that of Isoleucine--tRNA ligase from Prochlorococcus marinus (strain SARG / CCMP1375 / SS120).